Reading from the N-terminus, the 170-residue chain is Sec-independent protein translocase protein TatB (170 aa).

Residues 1–21 traverse the membrane as a helical segment; sequence MIDFGFDKIALIGAVALIVIG. Positions 69-170 are disordered; sequence AARNVEQSVS…VARFRPPRPL (102 aa). Polar residues predominate over residues 73 to 93; it reads VEQSVSSEVNRTSSEMNQAWE. The segment covering 128 to 137 has biased composition (basic residues); the sequence is HPRKNWRLKR.

This sequence belongs to the TatB family. In terms of assembly, the Tat system comprises two distinct complexes: a TatABC complex, containing multiple copies of TatA, TatB and TatC subunits, and a separate TatA complex, containing only TatA subunits. Substrates initially bind to the TatABC complex, which probably triggers association of the separate TatA complex to form the active translocon.

The protein localises to the cell inner membrane. Part of the twin-arginine translocation (Tat) system that transports large folded proteins containing a characteristic twin-arginine motif in their signal peptide across membranes. Together with TatC, TatB is part of a receptor directly interacting with Tat signal peptides. TatB may form an oligomeric binding site that transiently accommodates folded Tat precursor proteins before their translocation. The chain is Sec-independent protein translocase protein TatB from Methylibium petroleiphilum (strain ATCC BAA-1232 / LMG 22953 / PM1).